The chain runs to 297 residues: Polyamine aminopropyltransferase 2 (297 aa).

Residues 26–258 form the PABS domain; that stretch reads FYWEPDVEGG…DLWTFFVALK (233 aa). Gln-53 contacts S-methyl-5'-thioadenosine. His-84 and Glu-108 together coordinate spermidine. Residues Asp-128 and 157 to 158 contribute to the S-methyl-5'-thioadenosine site; that span reads DV. Residue Asp-176 is the Proton acceptor of the active site. Pro-184 contacts S-methyl-5'-thioadenosine.

Belongs to the spermidine/spermine synthase family. Homodimer or homotetramer.

It localises to the cytoplasm. The catalysed reaction is S-adenosyl 3-(methylsulfanyl)propylamine + putrescine = S-methyl-5'-thioadenosine + spermidine + H(+). The protein operates within amine and polyamine biosynthesis; spermidine biosynthesis; spermidine from putrescine: step 1/1. Catalyzes the irreversible transfer of a propylamine group from the amino donor S-adenosylmethioninamine (decarboxy-AdoMet) to putrescine (1,4-diaminobutane) to yield spermidine. This is Polyamine aminopropyltransferase 2 from Caldanaerobacter subterraneus subsp. tengcongensis (strain DSM 15242 / JCM 11007 / NBRC 100824 / MB4) (Thermoanaerobacter tengcongensis).